Consider the following 226-residue polypeptide: MVSPENTNWLSDYPLIEGAFSDQNPTFPWQIDGSATVSVEVDGFLCDADVIKEPSSRKRIKTESCTGSNSKACREKQRRDRLNDKFTELSSVLEPGRTPKTDKVAIINDAIRMVNQARDEAQKLKDLNSSLQEKIKELKDEKNELRDEKQKLKVEKERIDQQLKAIKTQPQPQPCFLPNPQTLSQAQAPGSKLVPFTTYPGFAMWQFMPPAAVDTSQDHVLRPPVA.

Residues 66–117 enclose the bHLH domain; sequence TGSNSKACREKQRRDRLNDKFTELSSVLEPGRTPKTDKVAIINDAIRMVNQA.

Homodimer. Interacts with BTS and BHLH47/PYE.

Its subcellular location is the nucleus. The polypeptide is Transcription factor bHLH115 (BHLH115) (Arabidopsis thaliana (Mouse-ear cress)).